A 254-amino-acid chain; its full sequence is Casein kinase II subunit beta-2 (254 aa).

It belongs to the casein kinase 2 subunit beta family. Tetramer composed of two alpha chains, one beta chain and one beta' chain. Post-translationally, phosphorylated by alpha subunit.

Its function is as follows. Regulatory subunit of casein kinase II/CK2. As part of the kinase complex regulates the basal catalytic activity of the alpha subunit a constitutively active serine/threonine-protein kinase that phosphorylates a large number of substrates containing acidic residues C-terminal to the phosphorylated serine or threonine. The protein is Casein kinase II subunit beta-2 of Schizosaccharomyces pombe (strain 972 / ATCC 24843) (Fission yeast).